Here is a 138-residue protein sequence, read N- to C-terminus: Cysteine desulfuration protein SufE (138 aa).

Cysteine 51 (cysteine persulfide intermediate) is an active-site residue.

It belongs to the SufE family. Homodimer. Interacts with SufS.

The protein resides in the cytoplasm. Its pathway is cofactor biosynthesis; iron-sulfur cluster biosynthesis. Its function is as follows. Participates in cysteine desulfuration mediated by SufS. Cysteine desulfuration mobilizes sulfur from L-cysteine to yield L-alanine and constitutes an essential step in sulfur metabolism for biosynthesis of a variety of sulfur-containing biomolecules. Functions as a sulfur acceptor for SufS, by mediating the direct transfer of the sulfur atom from the S-sulfanylcysteine of SufS, an intermediate product of cysteine desulfuration process. This Photorhabdus laumondii subsp. laumondii (strain DSM 15139 / CIP 105565 / TT01) (Photorhabdus luminescens subsp. laumondii) protein is Cysteine desulfuration protein SufE.